Reading from the N-terminus, the 495-residue chain is N-succinylglutamate 5-semialdehyde dehydrogenase (495 aa).

Position 220–225 (220–225) interacts with NAD(+); sequence GSAGTG. Residues E243 and C277 contribute to the active site.

Belongs to the aldehyde dehydrogenase family. AstD subfamily.

The enzyme catalyses N-succinyl-L-glutamate 5-semialdehyde + NAD(+) + H2O = N-succinyl-L-glutamate + NADH + 2 H(+). The protein operates within amino-acid degradation; L-arginine degradation via AST pathway; L-glutamate and succinate from L-arginine: step 4/5. Functionally, catalyzes the NAD-dependent reduction of succinylglutamate semialdehyde into succinylglutamate. This chain is N-succinylglutamate 5-semialdehyde dehydrogenase, found in Enterobacter sp. (strain 638).